Consider the following 354-residue polypeptide: Ferredoxin--NADP reductase (354 aa).

The FAD site is built by Asp-39, Gln-47, Tyr-52, Val-92, Phe-127, Asp-296, and Thr-337.

This sequence belongs to the ferredoxin--NADP reductase type 2 family. Homodimer. It depends on FAD as a cofactor.

The catalysed reaction is 2 reduced [2Fe-2S]-[ferredoxin] + NADP(+) + H(+) = 2 oxidized [2Fe-2S]-[ferredoxin] + NADPH. This chain is Ferredoxin--NADP reductase, found in Albidiferax ferrireducens (strain ATCC BAA-621 / DSM 15236 / T118) (Rhodoferax ferrireducens).